Consider the following 304-residue polypeptide: Recombination-associated protein RdgC (304 aa).

Belongs to the RdgC family.

The protein resides in the cytoplasm. The protein localises to the nucleoid. Functionally, may be involved in recombination. The protein is Recombination-associated protein RdgC of Shewanella baltica (strain OS223).